A 1462-amino-acid polypeptide reads, in one-letter code: Copper-transporting ATPase 2 (1462 aa).

Residues 1-23 (MDPRKNLASVGTMPEQERQVTAK) form a disordered region. Residues 1 to 655 (MDPRKNLASV…KTEIKQWKKS (655 aa)) are Cytoplasmic-facing. HMA domains lie at 68–134 (ATDV…FEAS), 153–219 (AVVK…FEAA), 267–333 (ATLP…PGHF), and 361–427 (RTAV…FEVS). Positions 79, 82, 164, 167, 278, and 281 each coordinate Cu(+). Positions 333–361 (FKVSLPDGVEENEPQSGSSQRHQEQGPGR) are disordered. Cys372 provides a ligand contact to Cu(+). Residues 460–487 (KMAPDTRGLPTHQGPGHSSETPSSPGAT) are disordered. The segment covering 475 to 487 (GHSSETPSSPGAT) has biased composition (polar residues). Phosphoserine occurs at positions 478 and 483. HMA domains lie at 490–556 (QKCF…FEAS) and 566–632 (GDIE…FHAS). Positions 501, 504, 577, and 580 each coordinate Cu(+). The helical transmembrane segment at 656 to 677 (FLCSLVFGIPVMGLMVYMLIPS) threads the bilayer. Over 678–699 (STPQETMVLDHNIIPGLSVLNL) the chain is Extracellular. Residues 700–719 (IFFILCTFVQFLGGWYFYVQ) form a helical membrane-spanning segment. Topologically, residues 720 to 726 (AYKSLRH) are cytoplasmic. A helical transmembrane segment spans residues 727–747 (RSANMDVLIVLATTIAYAYSL). Residues 748–766 (VILVVAVAEKAEKSPVTFF) are Extracellular-facing. A helical transmembrane segment spans residues 767–787 (DTPPMLFVFIALGRWLEHVAK). Residues 788 to 921 (SKTSEALAKL…KAPIQQLADR (134 aa)) are Cytoplasmic-facing. Residues 922-944 (FSGYFVPFIIIISTLTLVVWIVI) form a helical membrane-spanning segment. Residues 945–974 (GFVDFGVVQKYFPSPSKHISQTEVIIRFAF) are Extracellular-facing. Residues 975 to 996 (QTSITVLCIACPCSLGLATPTA) form a helical membrane-spanning segment. Over 997 to 1319 (VMVGTGVAAQ…LSKRTVRRIR (323 aa)) the chain is Cytoplasmic. Asp1029 acts as the 4-aspartylphosphate intermediate in catalysis. Positions 1264 and 1268 each coordinate Mg(2+). A helical membrane pass occupies residues 1320 to 1337 (VNLVLALIYNMVGIPIAA). At 1338–1348 (GVFMPIGIVLQ) the chain is on the extracellular side. A helical membrane pass occupies residues 1349-1368 (PWMGSAAMAASSVSVVLSSL). Topologically, residues 1369-1462 (QLKCYRKPDL…LSDRDEEQCI (94 aa)) are cytoplasmic. Phosphoserine occurs at positions 1395 and 1454.

It belongs to the cation transport ATPase (P-type) (TC 3.A.3) family. Type IB subfamily. As to quaternary structure, monomer. Interacts with COMMD1/MURR1. Interacts with DCTN4, in a copper-dependent manner. Interacts with ATOX1. Interacts (via C-terminus) with ZBTB16/PLZF. In terms of tissue distribution, detected in liver and kidney.

It localises to the golgi apparatus. The protein localises to the trans-Golgi network membrane. Its subcellular location is the late endosome. It carries out the reaction Cu(+)(in) + ATP + H2O = Cu(+)(out) + ADP + phosphate + H(+). Functionally, copper ion transmembrane transporter involved in the export of copper out of the cells, such as the efflux of hepatic copper into the bile. The protein is Copper-transporting ATPase 2 (Atp7b) of Mus musculus (Mouse).